Reading from the N-terminus, the 286-residue chain is 2-dehydro-3-deoxyphosphooctonate aldolase (286 aa).

Belongs to the KdsA family.

It localises to the cytoplasm. It carries out the reaction D-arabinose 5-phosphate + phosphoenolpyruvate + H2O = 3-deoxy-alpha-D-manno-2-octulosonate-8-phosphate + phosphate. The protein operates within carbohydrate biosynthesis; 3-deoxy-D-manno-octulosonate biosynthesis; 3-deoxy-D-manno-octulosonate from D-ribulose 5-phosphate: step 2/3. Its pathway is bacterial outer membrane biogenesis; lipopolysaccharide biosynthesis. In Actinobacillus pleuropneumoniae (Haemophilus pleuropneumoniae), this protein is 2-dehydro-3-deoxyphosphooctonate aldolase (kdsA).